We begin with the raw amino-acid sequence, 236 residues long: 1-(5-phosphoribosyl)-5-[(5-phosphoribosylamino)methylideneamino] imidazole-4-carboxamide isomerase (236 aa).

The active-site Proton acceptor is Asp-8. The active-site Proton donor is the Asp-127.

It belongs to the HisA/HisF family.

It is found in the cytoplasm. The catalysed reaction is 1-(5-phospho-beta-D-ribosyl)-5-[(5-phospho-beta-D-ribosylamino)methylideneamino]imidazole-4-carboxamide = 5-[(5-phospho-1-deoxy-D-ribulos-1-ylimino)methylamino]-1-(5-phospho-beta-D-ribosyl)imidazole-4-carboxamide. Its pathway is amino-acid biosynthesis; L-histidine biosynthesis; L-histidine from 5-phospho-alpha-D-ribose 1-diphosphate: step 4/9. In Campylobacter hominis (strain ATCC BAA-381 / DSM 21671 / CCUG 45161 / LMG 19568 / NCTC 13146 / CH001A), this protein is 1-(5-phosphoribosyl)-5-[(5-phosphoribosylamino)methylideneamino] imidazole-4-carboxamide isomerase.